The sequence spans 109 residues: MSCYSPCQTVACGPAPLANSCNEPCVLRCADSSVAIQPPPVVVTLPGPILSSFPQSTAVGSTASAAVGSSLSAGSVPVGARGSLGLGGFGWSGLGRGLCGTLGRGNVFC.

Residue Ser-2 is modified to N-acetylserine.

This sequence belongs to the avian keratin family.

This chain is Beta-keratin-related protein (BKJ), found in Coturnix japonica (Japanese quail).